We begin with the raw amino-acid sequence, 274 residues long: Glucosamine-6-phosphate deaminase (274 aa).

The active-site Proton acceptor; for enolization step is the aspartate 72. Aspartate 141 (for ring-opening step) is an active-site residue. The active-site Proton acceptor; for ring-opening step is the histidine 143. Glutamate 148 functions as the For ring-opening step in the catalytic mechanism.

Belongs to the glucosamine/galactosamine-6-phosphate isomerase family. Homohexamer.

It localises to the cytoplasm. It catalyses the reaction alpha-D-glucosamine 6-phosphate + H2O = beta-D-fructose 6-phosphate + NH4(+). It participates in nucleotide-sugar biosynthesis; UDP-N-acetyl-alpha-D-glucosamine biosynthesis; alpha-D-glucosamine 6-phosphate from D-fructose 6-phosphate: step 1/1. Functionally, catalyzes the reversible conversion of alpha-D-glucosamine 6-phosphate (GlcN-6P) into beta-D-fructose 6-phosphate (Fru-6P) and ammonium ion, a regulatory reaction step in de novo uridine diphosphate-N-acetyl-alpha-D-glucosamine (UDP-GlcNAc) biosynthesis via hexosamine pathway. This chain is Glucosamine-6-phosphate deaminase, found in Drosophila pseudoobscura pseudoobscura (Fruit fly).